A 36-amino-acid chain; its full sequence is Potassium channel toxin alpha-KTx 16.9 (36 aa).

3 disulfide bridges follow: C7–C28, C13–C33, and C17–C35.

The protein belongs to the short scorpion toxin superfamily. Potassium channel inhibitor family. Alpha-KTx 16 subfamily. In terms of tissue distribution, expressed by the venom gland.

The protein resides in the secreted. Its function is as follows. Poorly competes with (125)I-kaliotoxin binding on rat brain synaptosome (IC(50)&gt;100 nM). Is a poor Kv1.3/KCNA3 ligand. May have as real target KCa1.1/KCNMA1 channel. Shows weak toxicity on mice. This chain is Potassium channel toxin alpha-KTx 16.9, found in Buthus paris (Scorpion).